The chain runs to 204 residues: Leucyl/phenylalanyl-tRNA--protein transferase (204 aa).

Belongs to the L/F-transferase family.

The protein resides in the cytoplasm. The enzyme catalyses N-terminal L-lysyl-[protein] + L-leucyl-tRNA(Leu) = N-terminal L-leucyl-L-lysyl-[protein] + tRNA(Leu) + H(+). It carries out the reaction N-terminal L-arginyl-[protein] + L-leucyl-tRNA(Leu) = N-terminal L-leucyl-L-arginyl-[protein] + tRNA(Leu) + H(+). The catalysed reaction is L-phenylalanyl-tRNA(Phe) + an N-terminal L-alpha-aminoacyl-[protein] = an N-terminal L-phenylalanyl-L-alpha-aminoacyl-[protein] + tRNA(Phe). Functions in the N-end rule pathway of protein degradation where it conjugates Leu, Phe and, less efficiently, Met from aminoacyl-tRNAs to the N-termini of proteins containing an N-terminal arginine or lysine. The polypeptide is Leucyl/phenylalanyl-tRNA--protein transferase (Rhizobium etli (strain ATCC 51251 / DSM 11541 / JCM 21823 / NBRC 15573 / CFN 42)).